Here is a 349-residue protein sequence, read N- to C-terminus: Isopentenyl-diphosphate delta-isomerase (349 aa).

A substrate-binding site is contributed by 6–7; sequence RK. FMN contacts are provided by residues 62-64, Ser-93, and Asn-122; that span reads AMT. Gln-152 contributes to the substrate binding site. Glu-153 contributes to the Mg(2+) binding site. Residues Lys-184, Thr-214, 258–259, and 280–281 contribute to the FMN site; these read GG and AG.

It belongs to the IPP isomerase type 2 family. Homooctamer. Dimer of tetramers. The cofactor is FMN. NADPH serves as cofactor. Requires Mg(2+) as cofactor.

The protein resides in the cytoplasm. The catalysed reaction is isopentenyl diphosphate = dimethylallyl diphosphate. Its function is as follows. Involved in the biosynthesis of isoprenoids. Catalyzes the 1,3-allylic rearrangement of the homoallylic substrate isopentenyl (IPP) to its allylic isomer, dimethylallyl diphosphate (DMAPP). This chain is Isopentenyl-diphosphate delta-isomerase, found in Bacillus cereus (strain AH187).